Consider the following 1290-residue polypeptide: 1-phosphatidylinositol 4,5-bisphosphate phosphodiesterase gamma-1 (1290 aa).

A2 carries the N-acetylalanine modification. The PH 1 domain occupies 27–142 (RSLEVGTVMT…WIKGLTWLME (116 aa)). In terms of domain architecture, EF-hand spans 152-187 (QIERWLRKQFYSVDRNREDRISAKDLKNMLSQVNYR). Residues D165, N167, E169, R171, and D176 each contribute to the Ca(2+) site. The PI-PLC X-box domain maps to 320–464 (ETMNNPLSHY…LKRKILIKHK (145 aa)). Active-site residues include H335 and H380. In terms of domain architecture, PH 2; first part spans 489–523 (SIKNGILYLEDPVNHEWYPHYFVLTSSKIYYSEET). Position 506 is a phosphotyrosine (Y506). The interval 522-546 (ETSSDQGNEDEEEPKEASGSTELHS) is disordered. SH2 domains are found at residues 550–657 (WFHG…SEPV) and 668–756 (WYHA…RYPI). Y771 is subject to Phosphotyrosine; by SYK. A Phosphotyrosine modification is found at Y775. Y783 is modified (phosphotyrosine; by ITK, SYK and TXK). Residues 791-851 (TFKCAVKALF…PSNYVEEMIN (61 aa)) form the SH3 domain. Residues 895 to 931 (FVFSISMPSVAQWSLDVAADSQEELQDWVKKIREVAQ) form the PH 2; second part domain. Residues 953-1070 (LSELVVYCRP…GYVLQPSTMR (118 aa)) enclose the PI-PLC Y-box domain. Position 977 is a phosphotyrosine (Y977). Positions 1071–1194 (DEAFDPFDKS…TGYRAVPLKN (124 aa)) constitute a C2 domain. Residues S1221, S1227, S1233, and S1248 each carry the phosphoserine modification. Residue Y1253 is modified to Phosphotyrosine. S1263 carries the phosphoserine modification. The interval 1271–1290 (FDSRERRAPRRTRVNGDNRL) is disordered.

In terms of assembly, interacts with AGAP2 via its SH3 domain. Interacts (via SH2 domain) with RET. Interacts with FLT1 (tyrosine-phosphorylated). Interacts (via SH2 domain) with FGFR1, FGFR2, FGFR3 and FGFR4 (phosphorylated). Interacts with LAT (phosphorylated) upon TCR activation. Interacts (via SH3 domain) with the Pro-rich domain of TNK1. Associates with BLNK, VAV1, GRB2 and NCK1 in a B-cell antigen receptor-dependent fashion. Interacts with CBLB in activated T-cells; which inhibits phosphorylation. Interacts with SHB. Interacts (via SH3 domain) with the Arg/Gly-rich-flanked Pro-rich domains of KHDRBS1/SAM68. This interaction is selectively regulated by arginine methylation of KHDRBS1/SAM68. Interacts with INPP5D/SHIP1, THEMIS and CLNK. Interacts with AXL, FLT4 and KIT. Interacts with RALGPS1. Interacts (via the SH2 domains) with VIL1 (phosphorylated at C-terminus tyrosine phosphorylation sites). Interacts (via SH2 domain) with PDGFRA and PDGFRB (tyrosine phosphorylated). Interacts with PIP5K1C. Interacts with NTRK1 and NTRK2 (phosphorylated upon ligand-binding). Interacts with SYK; activates PLCG1. Interacts with GRB2, LAT and THEMIS upon TCR activation in thymocytes. Interacts with TESPA1; the association is increased with prolonged stimulation of the TCR and may facilitate the assembly of the LAT signalosome. Interacts (via C-terminal proline-rich domain (PRD)) with PLCG1 (via SH3 domain); this interaction leads to guanine nucleotide exchange from PlCG1 to DNM1 and enhances DNM1-dependent endocytosis. Ca(2+) is required as a cofactor. Ubiquitinated by CBLB in activated T-cells. Post-translationally, tyrosine phosphorylated in response to signaling via activated FLT3, KIT and PDGFRA. Tyrosine phosphorylated by activated FGFR1, FGFR2, FGFR3 and FGFR4. Tyrosine phosphorylated by activated FLT1 and KDR. Tyrosine phosphorylated by activated PDGFRB. The receptor-mediated activation of PLCG1 involves its phosphorylation by tyrosine kinases, in response to ligation of a variety of growth factor receptors and immune system receptors. For instance, SYK phosphorylates and activates PLCG1 in response to ligation of the B-cell receptor. May be dephosphorylated by PTPRJ. Phosphorylated by ITK and TXK on Tyr-783 upon TCR activation in T-cells.

Its subcellular location is the cell projection. The protein resides in the lamellipodium. It localises to the ruffle. The catalysed reaction is a 1,2-diacyl-sn-glycero-3-phospho-(1D-myo-inositol-4,5-bisphosphate) + H2O = 1D-myo-inositol 1,4,5-trisphosphate + a 1,2-diacyl-sn-glycerol + H(+). The enzyme catalyses a 1,2-diacyl-sn-glycero-3-phospho-(1D-myo-inositol) + H2O = 1D-myo-inositol 1-phosphate + a 1,2-diacyl-sn-glycerol + H(+). Activated by phosphorylation on tyrosine residues. In terms of biological role, mediates the production of the second messenger molecules diacylglycerol (DAG) and inositol 1,4,5-trisphosphate (IP3). Plays an important role in the regulation of intracellular signaling cascades. Becomes activated in response to ligand-mediated activation of receptor-type tyrosine kinases, such as PDGFRA, PDGFRB, EGFR, FGFR1, FGFR2, FGFR3 and FGFR4. Plays a role in actin reorganization and cell migration. Guanine nucleotide exchange factor that binds the GTPase DNM1 and catalyzes the dissociation of GDP, allowing a GTP molecule to bind in its place, therefore enhancing DNM1-dependent endocytosis. This is 1-phosphatidylinositol 4,5-bisphosphate phosphodiesterase gamma-1 from Rattus norvegicus (Rat).